The primary structure comprises 209 residues: Methylated-DNA--protein-cysteine methyltransferase (209 aa).

Residue cysteine 5 participates in Zn(2+) binding. Serine 14 bears the Phosphoserine mark. Residues cysteine 24, histidine 29, and histidine 89 each coordinate Zn(2+). Threonine 99, tyrosine 118, glutamine 119, asparagine 127, and arginine 132 together coordinate DNA. Cysteine 149 acts as the Nucleophile; methyl group acceptor in catalysis. DNA is bound at residue serine 155.

This sequence belongs to the MGMT family. Zn(2+) is required as a cofactor.

The protein resides in the nucleus. It carries out the reaction a 6-O-methyl-2'-deoxyguanosine in DNA + L-cysteinyl-[protein] = S-methyl-L-cysteinyl-[protein] + a 2'-deoxyguanosine in DNA. The enzyme catalyses a 4-O-methyl-thymidine in DNA + L-cysteinyl-[protein] = a thymidine in DNA + S-methyl-L-cysteinyl-[protein]. In terms of biological role, involved in the cellular defense against the biological effects of O6-methylguanine (O6-MeG) and O4-methylthymine (O4-MeT) in DNA. Repairs the methylated nucleobase in DNA by stoichiometrically transferring the methyl group to a cysteine residue in the enzyme. This is a suicide reaction: the enzyme is irreversibly inactivated. In Rattus norvegicus (Rat), this protein is Methylated-DNA--protein-cysteine methyltransferase (Mgmt).